The sequence spans 502 residues: Arabinose import ATP-binding protein AraG (502 aa).

ABC transporter domains follow at residues 5 to 240 (LEFS…MVGR) and 253 to 496 (LGGI…LPDK). 37–44 (GENGAGKS) is a binding site for ATP.

Belongs to the ABC transporter superfamily. Arabinose importer (TC 3.A.1.2.2) family. As to quaternary structure, the complex is composed of two ATP-binding proteins (AraG), two transmembrane proteins (AraH) and a solute-binding protein (AraF).

Its subcellular location is the cell inner membrane. It carries out the reaction L-arabinose(out) + ATP + H2O = L-arabinose(in) + ADP + phosphate + H(+). Part of the ABC transporter complex AraFGH involved in arabinose import. Responsible for energy coupling to the transport system. The sequence is that of Arabinose import ATP-binding protein AraG from Rhizobium johnstonii (strain DSM 114642 / LMG 32736 / 3841) (Rhizobium leguminosarum bv. viciae).